The chain runs to 831 residues: Vi polysaccharide biosynthesis protein TviD (831 aa).

The protein operates within glycan metabolism; Vi-antigen biosynthesis. It functions in the pathway capsule biogenesis; capsule polysaccharide biosynthesis. In terms of biological role, may be required for maturation of the Vi polysaccharide. This Salmonella typhi protein is Vi polysaccharide biosynthesis protein TviD (tviD).